We begin with the raw amino-acid sequence, 29 residues long: Cyclotide mela-2 (29 aa).

Positions 1–29 (GKPTCGETCFKGKCYTPGCTCSYPLCKKD) form a cross-link, cyclopeptide (Gly-Asp). Cystine bridges form between Cys5-Cys19, Cys9-Cys21, and Cys14-Cys26.

Post-translationally, this is a cyclic peptide. Contains 3 disulfide bonds.

In terms of biological role, probably participates in a plant defense mechanism (Potential). Binds to and induces leakage in phospholipd membranes, particularly ones containing 1-palmitoyl-2-oleophosphatidylethanolamine (POPE). In vitro, displays cytotoxicity against cultured cells but no hemolytic activity towards fresh erythrocytes. Not active against Gram-negative bacterium E.coli ATCC 25922 or Gram-positive bacterium S.aureus ATCC 25923 up to a concentration of 64 uM. The chain is Cyclotide mela-2 from Melicytus latifolius (Norfolk Island mahoe).